The following is a 742-amino-acid chain: MRLQPLFVSLALAAPCALLPTASLSAAPAAAARQADTAPVLVTAAQWQQMASEGRRYPWFAKEQARTEATLKKMMKAGIDVPVPRDKGGGRTHEQHKRNYQALLAAGTLYRLTGDRAYVDYARDMLLQYAQLYPTLGPHPEGRGQIPGRVFWQVLNDSVWLVNAIQGYDAIRDALSAEDRNTIESKVFRPMAEFLVSEPKNYDQIHNHATWAVAATGMTGYVLRDQELVEKSLRGSQKDDKFGFLRQIDLLFSPDGYYEEGPYYQRYALAPFLLFANAIERNEPQRKIFARRDGVLLKAVDVLVQSSYGGLFFPINDAILDKGIDTEELVAGIGIAYARTGDDRLLSVAEQQKRLLLSPEGLQVAQALAANKAKPFDYHPMLLRDGPDGDRGGLAILRMNGERGQALVQKDTMQGMGHGHFDKLNWLFYDNGNPVVTDYGAARFLNVEAKRGGIYLAENRSWAKQTVAHNTLVVDEQSHFNGNWKRGEAHAPQVRFFQADADTQIASATMRDAYPGVAFTRTQALLRHPDLGLPVVLDLLQVHGDKAARYDLPLHFNGHIVTTGFEAEHFPSQRPVLGKDNGYQHLWLDARSKPGSEPRSLAWLLDGRFYTYRFGSSAPAQALLVESGANDPEFNLRREPALLQRVDGQKDVTFFSVLEPHGEYNGTAEYVHGADSRIREIVRTRGSDAEVIELRLASGARIALGVADNSATTSEHSVTVDGHVYRWNGSHARLDRSKGDGK.

Positions 1 to 26 (MRLQPLFVSLALAAPCALLPTASLSA) are cleaved as a signal peptide. Substrate-binding positions include arginine 143, 153-156 (QVLN), glutamine 204, histidine 208, and 263-266 (YYQR). The Proton donor role is filled by tyrosine 264. The active-site Proton acceptor is the histidine 418. Positions 420 and 438 each coordinate Zn(2+). Residue arginine 443 coordinates substrate. Histidine 469 is a Zn(2+) binding site. Substrate is bound at residue glutamate 669.

Belongs to the polysaccharide lyase 17 family. As to quaternary structure, homodimer. Requires Zn(2+) as cofactor.

The protein localises to the periplasm. The catalysed reaction is Cleavage of 4-deoxy-alpha-L-erythro-hex-4-enopyranuronoside oligosaccharides into 4-deoxy-alpha-L-erythro-hex-4-enopyranuronate monosaccharides.. Its function is as follows. Polysaccharide lyase that catalyzes the depolymerization of alginate via a beta-elimination mechanism, cleaving the beta-1,4 glycosidic bond between two adjacent sugar residues. Acts specifically on alginate and each of its block structures, with highest activity toward poly-beta-D-mannuronate (poly-ManA). Shows an exolytic mode of action, producing unsaturated monomers. Displays a very low activity against poly-beta-D-glucuronate (poly-GlcA), and is not active on poly-alpha-D-galacturonate, hyaluronan, heparin, heparan sulfate and chondroitin sulfate. The polypeptide is Alginate lyase (Stenotrophomonas maltophilia (strain K279a)).